The following is a 662-amino-acid chain: Probable dolichyl-phosphate-mannose--protein mannosyltransferase 7 (662 aa).

Over 1–26 (MKDLRLQGPYRKYIPYNIFQQCGIGH) the chain is Lumenal. Residues 27 to 47 (LKTLDYIFAFLIVITNFTLIW) traverse the membrane as a helical segment. The Cytoplasmic segment spans residues 48–159 (KSHSSSFWNR…GTIISFDSLE (112 aa)). Residues 160 to 180 (WCLFSVVIYSFISISIAKLGT) traverse the membrane as a helical segment. Residues 181 to 195 (TNWFANVITLSISLG) lie on the Lumenal side of the membrane. Residues 196 to 216 (LAISSKFIGIVTWAFVILSFV) traverse the membrane as a helical segment. At 217 to 235 (RQFDRLISDVKVTTIQIIK) the chain is on the cytoplasmic side. The helical transmembrane segment at 236–256 (FVILCLLFVLIIPGSIFIISY) threads the bilayer. At 257–482 (SNLLSNFKTD…MEYPVIPRTT (226 aa)) the chain is on the lumenal side. In terms of domain architecture, MIR 1 spans 289–344 (PSRLYYGSTITLRHLDSMVGYLASHDISYPSDVDEQLVALSFEEFAADNEWLIEHP). Asn-347 carries an N-linked (GlcNAc...) asparagine glycan. MIR domains follow at residues 359–418 (LIPV…VLLI) and 432–488 (DKYI…IDSV). A helical membrane pass occupies residues 483–503 (FLIDSVQLPVDFQVPMIEYYI). The Cytoplasmic segment spans residues 504-565 (GKISSSAEFN…KWPITLDTDS (62 aa)). The helical transmembrane segment at 566 to 586 (PVWFNFAWYGSLLSMIIFMCV) threads the bilayer. The Lumenal portion of the chain corresponds to 587–617 (QCKRMISWNPWTTAEPSFSIKWEVYNEFGWE). Residues 618–638 (CIVGWFLHFYIFTMSPHFNLG) form a helical membrane-spanning segment. The Cytoplasmic segment spans residues 639-662 (KKLYFQSFFFSVLCLLESLDCLAK).

The protein belongs to the glycosyltransferase 39 family.

Its subcellular location is the endoplasmic reticulum membrane. The catalysed reaction is a di-trans,poly-cis-dolichyl beta-D-mannosyl phosphate + L-seryl-[protein] = 3-O-(alpha-D-mannosyl)-L-seryl-[protein] + a di-trans,poly-cis-dolichyl phosphate + H(+). It carries out the reaction a di-trans,poly-cis-dolichyl beta-D-mannosyl phosphate + L-threonyl-[protein] = 3-O-(alpha-D-mannosyl)-L-threonyl-[protein] + a di-trans,poly-cis-dolichyl phosphate + H(+). It participates in protein modification; protein glycosylation. Probable protein O-mannosyltransferase involved in O-glycosylation which is essential for cell wall rigidity. Transfers mannose from Dol-P-mannose to Ser or Thr residues on proteins. The protein is Probable dolichyl-phosphate-mannose--protein mannosyltransferase 7 of Saccharomyces cerevisiae (strain ATCC 204508 / S288c) (Baker's yeast).